The primary structure comprises 200 residues: Lipopolysaccharide core heptose(II)-phosphate phosphatase (200 aa).

The first 25 residues, 1–25, serve as a signal peptide directing secretion; that stretch reads MLAFCRSSLKSKKYFIILLALAAIA.

This sequence belongs to the phosphoglycerate mutase family. Ais subfamily.

Its subcellular location is the periplasm. The protein operates within bacterial outer membrane biogenesis; lipopolysaccharide metabolism. Its function is as follows. Catalyzes the dephosphorylation of heptose(II) of the outer membrane lipopolysaccharide core. This is Lipopolysaccharide core heptose(II)-phosphate phosphatase from Escherichia coli O157:H7 (strain EC4115 / EHEC).